The primary structure comprises 484 residues: Glutamate--tRNA ligase (484 aa).

The short motif at 12 to 22 is the 'HIGH' region element; that stretch reads PSPTGEPHVGT. Positions 253-257 match the 'KMSKS' region motif; sequence KLSKR. Lys256 provides a ligand contact to ATP.

This sequence belongs to the class-I aminoacyl-tRNA synthetase family. Glutamate--tRNA ligase type 1 subfamily. Monomer.

The protein resides in the cytoplasm. It catalyses the reaction tRNA(Glu) + L-glutamate + ATP = L-glutamyl-tRNA(Glu) + AMP + diphosphate. Its function is as follows. Catalyzes the attachment of glutamate to tRNA(Glu) in a two-step reaction: glutamate is first activated by ATP to form Glu-AMP and then transferred to the acceptor end of tRNA(Glu). The chain is Glutamate--tRNA ligase from Rhizobium leguminosarum bv. trifolii (strain WSM2304).